The chain runs to 180 residues: MKTIEVDDELYSYIASHTKHIGESASDILRRMLKFSATTQPTASAVKGTPAAQPVAEAKPVNPVKDKVRAMRELLLSDEYAEQKKAVNRFMLILTTLYSLDHHAFAEATESLHGRTRVYFAADEQTLLKNGNQTKPKHVPGTPYWVITNTNTGRKCSMIEHIMQSMQFPAELIEKVCGTI.

Interaction with DNA regions lie at residues Ala-86 to Val-87, Arg-115 to Tyr-119, and Asn-149 to Lys-155.

Belongs to the SeqA family. Homodimer. Polymerizes to form helical filaments.

The protein resides in the cytoplasm. Negative regulator of replication initiation, which contributes to regulation of DNA replication and ensures that replication initiation occurs exactly once per chromosome per cell cycle. Binds to pairs of hemimethylated GATC sequences in the oriC region, thus preventing assembly of replication proteins and re-initiation at newly replicated origins. Repression is relieved when the region becomes fully methylated. In Salmonella typhimurium (strain LT2 / SGSC1412 / ATCC 700720), this protein is Negative modulator of initiation of replication.